The following is a 147-amino-acid chain: Epididymal secretory protein E3-alpha (147 aa).

The signal sequence occupies residues 1–25 (MTSSLKIWGILLALLCILCRLCVYS).

As to expression, epididymis, with predominant expression in the corpus region. Moderately expressed in the vas deferens; only low levels are detectable in the caput and cauda regions.

The protein resides in the secreted. Possible function in sperm maturation. The polypeptide is Epididymal secretory protein E3-alpha (EDDM3A) (Homo sapiens (Human)).